Consider the following 83-residue polypeptide: Small ribosomal subunit protein eS21 (83 aa).

Met-1 bears the N-acetylmethionine mark. The residue at position 81 (Lys-81) is an N6-acetyllysine.

It belongs to the eukaryotic ribosomal protein eS21 family. As to quaternary structure, component of the 40S small ribosomal subunit.

Its subcellular location is the cytoplasm. It localises to the cytosol. It is found in the rough endoplasmic reticulum. In terms of biological role, component of the small ribosomal subunit. The ribosome is a large ribonucleoprotein complex responsible for the synthesis of proteins in the cell. In Mus musculus (Mouse), this protein is Small ribosomal subunit protein eS21 (Rps21).